A 295-amino-acid polypeptide reads, in one-letter code: 4-diphosphocytidyl-2-C-methyl-D-erythritol kinase (295 aa).

The active site involves lysine 22. 106–116 (PAGGGFGGGSS) serves as a coordination point for ATP. Residue aspartate 148 is part of the active site.

The protein belongs to the GHMP kinase family. IspE subfamily.

It catalyses the reaction 4-CDP-2-C-methyl-D-erythritol + ATP = 4-CDP-2-C-methyl-D-erythritol 2-phosphate + ADP + H(+). Its pathway is isoprenoid biosynthesis; isopentenyl diphosphate biosynthesis via DXP pathway; isopentenyl diphosphate from 1-deoxy-D-xylulose 5-phosphate: step 3/6. Catalyzes the phosphorylation of the position 2 hydroxy group of 4-diphosphocytidyl-2C-methyl-D-erythritol. The polypeptide is 4-diphosphocytidyl-2-C-methyl-D-erythritol kinase (Xanthomonas campestris pv. campestris (strain 8004)).